Here is a 144-residue protein sequence, read N- to C-terminus: MGSKIFLLLGLSIAFAILISSEVAARELAETAAKTEGYNNGGGYHNGGGGYNNGGGYHNGGGGYNNGGGYHNGGGGYNNGGGYHNGGGGYNNGGGHHNGGGGYNNGGGYHGGGGSCYHYCHGRCCSAAEAKALEATTAQVKPQN.

Residues 5-25 (IFLLLGLSIAFAILISSEVAA) traverse the membrane as a helical segment. 11 tandem repeats follow at residues 37–42 (GYNNGG), 43–48 (GYHNGG), 50–55 (GYNNGG), 56–61 (GYHNGG), 63–68 (GYNNGG), 69–74 (GYHNGG), 76–81 (GYNNGG), 82–87 (GYHNGG), 89–94 (GYNNGG), 102–107 (GYNNGG), and 108–113 (GYHGGG). The interval 37-113 (GYNNGGGYHN…NNGGGYHGGG (77 aa)) is 11 X 6 AA tandem repeats of G-Y-[NH]-N-G -G.

It belongs to the GRP family.

It localises to the membrane. The polypeptide is Glycine-rich protein HC1 (Oxybasis rubra (Red goosefoot)).